The primary structure comprises 142 residues: MEITSVNHICFSVSDLNTSIQFYKDILHGDLLVSGRTTAYLTIGHTWIALNQEKNIPRNEISHSYTHIAFSIDEEDFQQWIQWLKENQVNILKGRPRDIKDKKSIYFTDPDGHKIELHTGTLKDRMEYYKCENTHMQFYDEF.

A VOC domain is found at 5–120 (SVNHICFSVS…DGHKIELHTG (116 aa)). Mg(2+)-binding residues include His8, His67, and Glu116. The active-site Proton donor/acceptor is Glu116.

The protein belongs to the fosfomycin resistance protein family. FosB subfamily. Homodimer. Requires Mg(2+) as cofactor.

The protein localises to the cytoplasm. In terms of biological role, metallothiol transferase which confers resistance to fosfomycin by catalyzing the addition of a thiol cofactor to fosfomycin. L-cysteine is probably the physiological thiol donor. In Staphylococcus epidermidis (strain ATCC 12228 / FDA PCI 1200), this protein is Metallothiol transferase FosB.